A 100-amino-acid chain; its full sequence is Urease subunit gamma (100 aa).

Belongs to the urease gamma subunit family. Heterotrimer of UreA (gamma), UreB (beta) and UreC (alpha) subunits. Three heterotrimers associate to form the active enzyme.

The protein localises to the cytoplasm. The catalysed reaction is urea + 2 H2O + H(+) = hydrogencarbonate + 2 NH4(+). The protein operates within nitrogen metabolism; urea degradation; CO(2) and NH(3) from urea (urease route): step 1/1. This Synechococcus sp. (strain RCC307) protein is Urease subunit gamma.